We begin with the raw amino-acid sequence, 342 residues long: Phenylalanine--tRNA ligase alpha subunit (342 aa).

Residue E255 participates in Mg(2+) binding.

It belongs to the class-II aminoacyl-tRNA synthetase family. Phe-tRNA synthetase alpha subunit type 1 subfamily. As to quaternary structure, tetramer of two alpha and two beta subunits. Mg(2+) serves as cofactor.

The protein resides in the cytoplasm. The enzyme catalyses tRNA(Phe) + L-phenylalanine + ATP = L-phenylalanyl-tRNA(Phe) + AMP + diphosphate + H(+). In Pelodictyon phaeoclathratiforme (strain DSM 5477 / BU-1), this protein is Phenylalanine--tRNA ligase alpha subunit.